The chain runs to 96 residues: Aspartyl/glutamyl-tRNA(Asn/Gln) amidotransferase subunit C (96 aa).

The protein belongs to the GatC family. Heterotrimer of A, B and C subunits.

The enzyme catalyses L-glutamyl-tRNA(Gln) + L-glutamine + ATP + H2O = L-glutaminyl-tRNA(Gln) + L-glutamate + ADP + phosphate + H(+). It catalyses the reaction L-aspartyl-tRNA(Asn) + L-glutamine + ATP + H2O = L-asparaginyl-tRNA(Asn) + L-glutamate + ADP + phosphate + 2 H(+). Allows the formation of correctly charged Asn-tRNA(Asn) or Gln-tRNA(Gln) through the transamidation of misacylated Asp-tRNA(Asn) or Glu-tRNA(Gln) in organisms which lack either or both of asparaginyl-tRNA or glutaminyl-tRNA synthetases. The reaction takes place in the presence of glutamine and ATP through an activated phospho-Asp-tRNA(Asn) or phospho-Glu-tRNA(Gln). In Bacillus anthracis (strain A0248), this protein is Aspartyl/glutamyl-tRNA(Asn/Gln) amidotransferase subunit C.